The sequence spans 1150 residues: PAN2-PAN3 deadenylation complex catalytic subunit PAN2 (1150 aa).

4 WD repeats span residues Ala-26–Gln-67, Gly-114–Glu-156, Pro-158–Thr-194, and Gly-290–Val-328. Residues Ser-326 to Ser-471 form a linker region. Residues Val-472–Lys-862 form the USP domain. Positions Ala-911–Ala-1079 constitute an Exonuclease domain. A divalent metal cation contacts are provided by Asp-913, Glu-915, Asp-1022, and Asp-1075. Residues Gly-1118–Ser-1150 form a disordered region.

Belongs to the peptidase C19 family. PAN2 subfamily. In terms of assembly, forms a heterotrimer with an asymmetric homodimer of the regulatory subunit PAN3 to form the poly(A)-nuclease (PAN) deadenylation complex. The cofactor is a divalent metal cation.

It localises to the cytoplasm. The catalysed reaction is Exonucleolytic cleavage of poly(A) to 5'-AMP.. Its activity is regulated as follows. Positively regulated by the regulatory subunit PAN3. In terms of biological role, catalytic subunit of the poly(A)-nuclease (PAN) deadenylation complex, one of two cytoplasmic mRNA deadenylases involved in mRNA turnover. PAN specifically shortens poly(A) tails of RNA and the activity is stimulated by poly(A)-binding protein PAB1. PAN deadenylation is followed by rapid degradation of the shortened mRNA tails by the CCR4-NOT complex. Deadenylated mRNAs are then degraded by two alternative mechanisms, namely exosome-mediated 3'-5' exonucleolytic degradation, or deadenylation-dependent mRNA decaping and subsequent 5'-3' exonucleolytic degradation by XRN1. May also be involved in post-transcriptional maturation of mRNA poly(A) tails. This is PAN2-PAN3 deadenylation complex catalytic subunit PAN2 from Pyricularia oryzae (strain 70-15 / ATCC MYA-4617 / FGSC 8958) (Rice blast fungus).